The following is a 102-amino-acid chain: MKFLIAFVAIAFFACVSAGGYGNIGLGGYGLGNVGYLQNHGGGYGRRPILISKSSNPSAAAAAAAASSGVNSGLYNQRGVIGYELDGGILGGHGGYGGGLGY.

An N-terminal signal peptide occupies residues 1–18; that stretch reads MKFLIAFVAIAFFACVSA.

The protein belongs to the chorion protein S15/S18 family.

It localises to the secreted. Its function is as follows. Chorion membrane (egg shell) protein; plays a role in protecting the egg from the environment. In Drosophila grimshawi (Hawaiian fruit fly), this protein is Chorion protein S15 (Cp15).